We begin with the raw amino-acid sequence, 238 residues long: ATP synthase subunit a (238 aa).

5 consecutive transmembrane segments (helical) span residues leucine 18–alanine 38, tyrosine 76–phenylalanine 96, asparagine 114–isoleucine 134, serine 166–valine 186, and leucine 193–isoleucine 213.

This sequence belongs to the ATPase A chain family. As to quaternary structure, F-type ATPases have 2 components, CF(1) - the catalytic core - and CF(0) - the membrane proton channel. CF(1) has five subunits: alpha(3), beta(3), gamma(1), delta(1), epsilon(1). CF(0) has three main subunits: a(1), b(2) and c(9-12). The alpha and beta chains form an alternating ring which encloses part of the gamma chain. CF(1) is attached to CF(0) by a central stalk formed by the gamma and epsilon chains, while a peripheral stalk is formed by the delta and b chains.

The protein localises to the cell membrane. Its function is as follows. Key component of the proton channel; it plays a direct role in the translocation of protons across the membrane. The chain is ATP synthase subunit a from Streptococcus equi subsp. zooepidemicus (strain H70).